The following is a 271-amino-acid chain: Urease accessory protein UreD (271 aa).

It belongs to the UreD family. As to quaternary structure, ureD, UreF and UreG form a complex that acts as a GTP-hydrolysis-dependent molecular chaperone, activating the urease apoprotein by helping to assemble the nickel containing metallocenter of UreC. The UreE protein probably delivers the nickel.

The protein localises to the cytoplasm. Required for maturation of urease via the functional incorporation of the urease nickel metallocenter. This is Urease accessory protein UreD from Azorhizobium caulinodans (strain ATCC 43989 / DSM 5975 / JCM 20966 / LMG 6465 / NBRC 14845 / NCIMB 13405 / ORS 571).